Consider the following 260-residue polypeptide: Hydroxyethylthiazole kinase (260 aa).

M38 contributes to the substrate binding site. Residues R114 and T159 each coordinate ATP. G186 contacts substrate.

Belongs to the Thz kinase family. Mg(2+) is required as a cofactor.

It catalyses the reaction 5-(2-hydroxyethyl)-4-methylthiazole + ATP = 4-methyl-5-(2-phosphooxyethyl)-thiazole + ADP + H(+). Its pathway is cofactor biosynthesis; thiamine diphosphate biosynthesis; 4-methyl-5-(2-phosphoethyl)-thiazole from 5-(2-hydroxyethyl)-4-methylthiazole: step 1/1. In terms of biological role, catalyzes the phosphorylation of the hydroxyl group of 4-methyl-5-beta-hydroxyethylthiazole (THZ). The polypeptide is Hydroxyethylthiazole kinase (Helicobacter pylori (strain HPAG1)).